The following is a 197-amino-acid chain: Large ribosomal subunit protein uL11 (197 aa).

This sequence belongs to the universal ribosomal protein uL11 family. In terms of assembly, part of the ribosomal stalk of the 50S ribosomal subunit. Interacts with L10 and the large rRNA to form the base of the stalk. L10 forms an elongated spine to which L12 dimers bind in a sequential fashion forming a multimeric L10(L12)X complex. In terms of processing, one or more lysine residues are methylated.

In terms of biological role, forms part of the ribosomal stalk which helps the ribosome interact with GTP-bound translation factors. This is Large ribosomal subunit protein uL11 from Mycoplasmopsis pulmonis (strain UAB CTIP) (Mycoplasma pulmonis).